The chain runs to 234 residues: UDP-2,3-diacylglucosamine hydrolase (234 aa).

Mn(2+) is bound by residues Asp9, His11, Asp42, Asn80, and His115. 80 to 81 (NR) serves as a coordination point for substrate. Substrate contacts are provided by Asp123, Ser161, Lys165, Lys168, and His196. Residues His196 and His198 each coordinate Mn(2+).

Belongs to the LpxH family. Mn(2+) serves as cofactor.

The protein localises to the cell inner membrane. The catalysed reaction is UDP-2-N,3-O-bis[(3R)-3-hydroxytetradecanoyl]-alpha-D-glucosamine + H2O = 2-N,3-O-bis[(3R)-3-hydroxytetradecanoyl]-alpha-D-glucosaminyl 1-phosphate + UMP + 2 H(+). Its pathway is glycolipid biosynthesis; lipid IV(A) biosynthesis; lipid IV(A) from (3R)-3-hydroxytetradecanoyl-[acyl-carrier-protein] and UDP-N-acetyl-alpha-D-glucosamine: step 4/6. Its function is as follows. Hydrolyzes the pyrophosphate bond of UDP-2,3-diacylglucosamine to yield 2,3-diacylglucosamine 1-phosphate (lipid X) and UMP by catalyzing the attack of water at the alpha-P atom. Involved in the biosynthesis of lipid A, a phosphorylated glycolipid that anchors the lipopolysaccharide to the outer membrane of the cell. The sequence is that of UDP-2,3-diacylglucosamine hydrolase from Haemophilus ducreyi (strain 35000HP / ATCC 700724).